The sequence spans 81 residues: Photosystem I iron-sulfur center (81 aa).

2 4Fe-4S ferredoxin-type domains span residues 2-31 (AHSV…MVPW) and 39-68 (IASA…VRVY). [4Fe-4S] cluster-binding residues include C11, C14, C17, C21, C48, C51, C54, and C58.

The eukaryotic PSI reaction center is composed of at least 11 subunits. It depends on [4Fe-4S] cluster as a cofactor.

Its subcellular location is the plastid. The protein resides in the chloroplast thylakoid membrane. It catalyses the reaction reduced [plastocyanin] + hnu + oxidized [2Fe-2S]-[ferredoxin] = oxidized [plastocyanin] + reduced [2Fe-2S]-[ferredoxin]. Apoprotein for the two 4Fe-4S centers FA and FB of photosystem I (PSI); essential for photochemical activity. FB is the terminal electron acceptor of PSI, donating electrons to ferredoxin. The C-terminus interacts with PsaA/B/D and helps assemble the protein into the PSI complex. Required for binding of PsaD and PsaE to PSI. PSI is a plastocyanin/cytochrome c6-ferredoxin oxidoreductase, converting photonic excitation into a charge separation, which transfers an electron from the donor P700 chlorophyll pair to the spectroscopically characterized acceptors A0, A1, FX, FA and FB in turn. This chain is Photosystem I iron-sulfur center, found in Gracilaria tenuistipitata var. liui (Red alga).